Reading from the N-terminus, the 130-residue chain is Small ribosomal subunit protein uS9 (130 aa).

Residues 105–130 (TRDSRMVERKKPGLKKARRASQFSKR) form a disordered region. The segment covering 106 to 115 (RDSRMVERKK) has biased composition (basic and acidic residues). Basic residues predominate over residues 116–130 (PGLKKARRASQFSKR).

Belongs to the universal ribosomal protein uS9 family.

The protein is Small ribosomal subunit protein uS9 of Oenococcus oeni (strain ATCC BAA-331 / PSU-1).